Reading from the N-terminus, the 111-residue chain is Sulditoxin subunit B (111 aa).

An N-terminal signal peptide occupies residues 1–19 (MKTLLLALAVVVLVCLGSA). Positions 20–34 (NELGLGRQQIDRGRR) are excised as a propeptide. A Pyrrolidone carboxylic acid modification is found at Q35. 5 disulfides stabilise this stretch: C44/C68, C47/C55, C61/C87, C91/C102, and C103/C108.

It belongs to the three-finger toxin family. Ancestral subfamily. Boigatoxin sub-subfamily. In terms of assembly, heterodimer of sulditoxin subunits A and B; probably disulfide-linked. As to expression, expressed by the venom gland.

The protein localises to the secreted. Reptile-specific neurotoxin (tested on geckos). Inhibits nicotinic acetylcholine receptor (nAChR). Not toxic to mammals (tested on mice). This Spilotes sulphureus (Amazon puffing snake) protein is Sulditoxin subunit B.